Consider the following 408-residue polypeptide: Serine/threonine transporter SstT (408 aa).

9 helical membrane passes run 14–34 (GNLI…GIFS), 43–63 (IFGA…VFIL), 83–103 (IIFL…SISF), 143–163 (ALSS…GFAL), 181–201 (VLKI…GLVA), 219–239 (LIIL…LIVF), 247–269 (YPLI…SSAA), 290–310 (ISIP…IAIL), and 332–352 (VLAA…LLLI).

It belongs to the dicarboxylate/amino acid:cation symporter (DAACS) (TC 2.A.23) family.

The protein localises to the cell inner membrane. The catalysed reaction is L-serine(in) + Na(+)(in) = L-serine(out) + Na(+)(out). It catalyses the reaction L-threonine(in) + Na(+)(in) = L-threonine(out) + Na(+)(out). Its function is as follows. Involved in the import of serine and threonine into the cell, with the concomitant import of sodium (symport system). The sequence is that of Serine/threonine transporter SstT from Campylobacter lari (strain RM2100 / D67 / ATCC BAA-1060).